Consider the following 301-residue polypeptide: Large ribosomal subunit protein uL18y (301 aa).

The interval 247–267 (RAEPNHKKTEKSAPKEHKRYN) is disordered. The segment covering 249 to 261 (EPNHKKTEKSAPK) has biased composition (basic and acidic residues).

It belongs to the universal ribosomal protein uL18 family. As to quaternary structure, component of the large ribosomal subunit (LSU).

It is found in the cytoplasm. The protein localises to the nucleus. It localises to the nucleolus. The protein resides in the nucleoplasm. Its function is as follows. Component of the ribosome, a large ribonucleoprotein complex responsible for the synthesis of proteins in the cell. The small ribosomal subunit (SSU) binds messenger RNAs (mRNAs) and translates the encoded message by selecting cognate aminoacyl-transfer RNA (tRNA) molecules. The large subunit (LSU) contains the ribosomal catalytic site termed the peptidyl transferase center (PTC), which catalyzes the formation of peptide bonds, thereby polymerizing the amino acids delivered by tRNAs into a polypeptide chain. The nascent polypeptides leave the ribosome through a tunnel in the LSU and interact with protein factors that function in enzymatic processing, targeting, and the membrane insertion of nascent chains at the exit of the ribosomal tunnel. Seems involved in the regulation of cell proliferation. Essential in leaf polarity establishment, probably having a role for translation in leaf dorsoventral patterning to specify leaf adaxial identity. The sequence is that of Large ribosomal subunit protein uL18y from Arabidopsis thaliana (Mouse-ear cress).